Consider the following 233-residue polypeptide: Rano class II histocompatibility antigen, A beta chain (233 aa).

Residues 1–80 (DFVYQFKGLC…DTVCRYNYEE (80 aa)) are beta-1. The Extracellular segment spans residues 1–194 (DFVYQFKGLC…RAQSESAQSK (194 aa)). Asn14 carries an N-linked (GlcNAc...) asparagine glycan. The beta-2 stretch occupies residues 81 to 184 (TEVPTSLRRL…SLESPVTVEW (104 aa)). The 89-residue stretch at 93–181 (PNVAISLSRT…DHASLESPVT (89 aa)) folds into the Ig-like C1-type domain. The interval 185-194 (RAQSESAQSK) is connecting peptide. The helical transmembrane segment at 195 to 215 (MLSGIGGLVLGVIFLGLGLFI) threads the bilayer. Residues 216–233 (RHKRQKGPQGPPPAGLLQ) lie on the Cytoplasmic side of the membrane.

The protein belongs to the MHC class II family.

Its subcellular location is the membrane. In terms of biological role, involved in the presentation of foreign antigens to the immune system. The polypeptide is Rano class II histocompatibility antigen, A beta chain (RT1-B) (Rattus norvegicus (Rat)).